Consider the following 91-residue polypeptide: Large ribosomal subunit protein bL31B-1 (91 aa).

It belongs to the bacterial ribosomal protein bL31 family. Type B subfamily. As to quaternary structure, part of the 50S ribosomal subunit.

This Streptomyces avermitilis (strain ATCC 31267 / DSM 46492 / JCM 5070 / NBRC 14893 / NCIMB 12804 / NRRL 8165 / MA-4680) protein is Large ribosomal subunit protein bL31B-1.